A 405-amino-acid chain; its full sequence is Tryptophan synthase beta chain (405 aa).

Residue Lys98 is modified to N6-(pyridoxal phosphate)lysine.

This sequence belongs to the TrpB family. In terms of assembly, tetramer of two alpha and two beta chains. Requires pyridoxal 5'-phosphate as cofactor.

It carries out the reaction (1S,2R)-1-C-(indol-3-yl)glycerol 3-phosphate + L-serine = D-glyceraldehyde 3-phosphate + L-tryptophan + H2O. The protein operates within amino-acid biosynthesis; L-tryptophan biosynthesis; L-tryptophan from chorismate: step 5/5. Functionally, the beta subunit is responsible for the synthesis of L-tryptophan from indole and L-serine. This chain is Tryptophan synthase beta chain, found in Xylella fastidiosa (strain M23).